Consider the following 647-residue polypeptide: Putative ankyrin repeat protein L764 (647 aa).

ANK repeat units follow at residues Leu-123–Leu-154, Leu-202–Leu-231, Glu-233–Glu-256, Asn-258–Ser-284, Ser-289–Val-319, Asp-348–Lys-377, Asn-401–Leu-431, Phe-529–Glu-558, and Asn-588–Asn-617.

The chain is Putative ankyrin repeat protein L764 from Acanthamoeba polyphaga (Amoeba).